A 310-amino-acid polypeptide reads, in one-letter code: Protoheme IX farnesyltransferase 2 (310 aa).

Transmembrane regions (helical) follow at residues 25–45 (PGII…AAKG), 49–69 (LVLM…GCAI), 98–118 (HVLL…ALFT), 121–141 (LALL…SLYM), 145–165 (SVYG…VGYC), 176–196 (VILL…IAIF), 222–242 (IVLY…AGYT), 245–265 (AFMA…LKGY), and 277–297 (QVFG…ALDF).

The protein belongs to the UbiA prenyltransferase family. Protoheme IX farnesyltransferase subfamily.

The protein resides in the cell inner membrane. It carries out the reaction heme b + (2E,6E)-farnesyl diphosphate + H2O = Fe(II)-heme o + diphosphate. It functions in the pathway porphyrin-containing compound metabolism; heme O biosynthesis; heme O from protoheme: step 1/1. Functionally, converts heme B (protoheme IX) to heme O by substitution of the vinyl group on carbon 2 of heme B porphyrin ring with a hydroxyethyl farnesyl side group. The protein is Protoheme IX farnesyltransferase 2 of Shewanella sp. (strain MR-7).